The sequence spans 151 residues: SsrA-binding protein (151 aa).

Positions 132-151 (KRQTIKKRDQDREIHRKYGI) are disordered.

This sequence belongs to the SmpB family.

It is found in the cytoplasm. In terms of biological role, required for rescue of stalled ribosomes mediated by trans-translation. Binds to transfer-messenger RNA (tmRNA), required for stable association of tmRNA with ribosomes. tmRNA and SmpB together mimic tRNA shape, replacing the anticodon stem-loop with SmpB. tmRNA is encoded by the ssrA gene; the 2 termini fold to resemble tRNA(Ala) and it encodes a 'tag peptide', a short internal open reading frame. During trans-translation Ala-aminoacylated tmRNA acts like a tRNA, entering the A-site of stalled ribosomes, displacing the stalled mRNA. The ribosome then switches to translate the ORF on the tmRNA; the nascent peptide is terminated with the 'tag peptide' encoded by the tmRNA and targeted for degradation. The ribosome is freed to recommence translation, which seems to be the essential function of trans-translation. In Lactobacillus johnsonii (strain CNCM I-12250 / La1 / NCC 533), this protein is SsrA-binding protein.